A 617-amino-acid chain; its full sequence is tRNA-dihydrouridine(47) synthase [NAD(P)(+)] (617 aa).

Residues 42 to 70 form a C3H1-type zinc finger; that stretch reads KENNALCPAISIGNECPYKENCKFPHDVE. Positions 160-193 are disordered; the sequence is EEKPDPSSKVSNIPEENRDATSAISEGKETESVS. FMN contacts are provided by residues 245–247 and Gln308; that span reads PLT. Cys340 acts as the Proton donor in catalysis. Residues Lys380, His411, 460-462, and 483-484 each bind FMN; these read NGD and AR.

This sequence belongs to the Dus family. Dus3 subfamily. Requires FMN as cofactor.

It is found in the cytoplasm. The protein localises to the nucleus. It carries out the reaction 5,6-dihydrouridine(47) in tRNA + NAD(+) = uridine(47) in tRNA + NADH + H(+). It catalyses the reaction 5,6-dihydrouridine(47) in tRNA + NADP(+) = uridine(47) in tRNA + NADPH + H(+). The enzyme catalyses a 5,6-dihydrouridine in mRNA + NAD(+) = a uridine in mRNA + NADH + H(+). The catalysed reaction is a 5,6-dihydrouridine in mRNA + NADP(+) = a uridine in mRNA + NADPH + H(+). Catalyzes the synthesis of dihydrouridine, a modified base, in various RNAs, such as tRNAs and mRNAs. Modifies the uridine in position 47 (U47) in the D-loop of tRNAs. Also able to mediate formation of dihydrouridine outside of the D-loop of tRNAs. Catalyzes the synthesis of dihydrouridine in some mRNAs, thereby affecting their translation. Dus3-mediated dihydrouridylation of the mRNA encoding alpha-tubulin nda2 is required for meiotic chromosome segregation. This is tRNA-dihydrouridine(47) synthase [NAD(P)(+)] from Schizosaccharomyces pombe (strain 972 / ATCC 24843) (Fission yeast).